A 375-amino-acid chain; its full sequence is Ketohexokinase (375 aa).

Position 319 (aspartate 319) interacts with beta-D-fructose.

Belongs to the carbohydrate kinase PfkB family. As to quaternary structure, homodimer.

It carries out the reaction beta-D-fructose + ATP = beta-D-fructose 1-phosphate + ADP + H(+). Its pathway is carbohydrate metabolism; fructose metabolism. With respect to regulation, activated in the presence of 0.5 M KCl. 85% activity at 3.5 M KCl. 60% activity without KCl. Catalyzes the ATP-dependent phosphorylation of the ketose sugar fructose to fructose-1-phosphate. Does not produce fructose-6-phosphate. The sugars D-glucose, D-galactose, L-rhamnose, D-xylose, L-arabinose and D-ribose are not substrates of this enzyme. This is Ketohexokinase from Haloferax volcanii (strain ATCC 29605 / DSM 3757 / JCM 8879 / NBRC 14742 / NCIMB 2012 / VKM B-1768 / DS2) (Halobacterium volcanii).